Reading from the N-terminus, the 370-residue chain is Putative F-box protein At1g46984 (370 aa).

The region spanning 18 to 64 (YTQLSTLPIDLIIEILSRLPMNSIAICRLVSKQWASILQSSDFTESF) is the F-box domain.

In Arabidopsis thaliana (Mouse-ear cress), this protein is Putative F-box protein At1g46984.